A 217-amino-acid chain; its full sequence is Cytochrome b5 domain-containing protein 1 (217 aa).

The region spanning 6-72 (PRFYTPREVS…NPKTGDVKTH (67 aa)) is the Cytochrome b5 heme-binding domain. 2 residues coordinate heme: His-41 and His-72.

Belongs to the cytochrome b5 family.

It is found in the cytoplasm. The protein localises to the cytoskeleton. Its subcellular location is the cilium axoneme. Radial spoke stalk protein that binds heme under oxidizing conditions. Required for the coordinated beating of multiple cilia maybe by functioning in a redox signaling pathway. This chain is Cytochrome b5 domain-containing protein 1 (cyb5d1), found in Xenopus tropicalis (Western clawed frog).